The following is a 1846-amino-acid chain: Brefeldin A-inhibited guanine nucleotide-exchange protein 1 (1846 aa).

Positions 2–224 (YEGKKTKNMF…QEAKQMERER (223 aa)) are DCB; DCB:DCB domain and DCB:HUS domain interaction. Residue S52 is modified to Phosphoserine. Disordered stretches follow at residues 216–249 (EAKQ…LRYL), 264–304 (DLEP…ATAA), and 347–410 (ISAS…SPGA). The segment covering 264-277 (DLEPQTHDVDKSLQ) has biased composition (basic and acidic residues). Residues S286, S289, and S290 each carry the phosphoserine modification. Polar residues-rich tracts occupy residues 348–357 (SASTEGNTGT) and 391–406 (SVSS…SSGP). 2 positions are modified to phosphoserine: S394 and S407. The tract at residues 554–574 (ADAQSVVDIYVNYDCDLNAAN) is HUS; DCB:HUS domain interaction. The interval 631 to 684 (PNSQTTLGQEKPSEQEISEVKHPETINRYGSLNSLESTSSSGIGSYSTQMSGTD) is disordered. Basic and acidic residues predominate over residues 641-655 (KPSEQEISEVKHPET). Positions 661 to 681 (SLNSLESTSSSGIGSYSTQMS) are enriched in low complexity. An SEC7 domain is found at 688 to 877 (QFEVLKQQKE…SAIYNEIAGK (190 aa)). The Nuclear localization signal (NLS) signature appears at 708–712 (KKPKR). Phosphoserine occurs at positions 1076, 1563, and 1566.

In terms of assembly, homodimer. Interacts with ARFGEF2/BIG2; both proteins are probably part of the same or very similar macromolecular complexes. Interacts with FKBP2. Interacts with MYO9B. Interacts with PRKAR1A and PRKAR2A. Interacts with PPP1CC. Interacts with NCL, FBL, NUP62 and U3 small nucleolar RNA. Interacts with DPY30. Interacts with PDE3A. Interacts with KANK1. Interacts with TBC1D22A and TBC1D22B. In terms of processing, phosphorylated. In vitro phosphorylated by PKA reducing its GEF activity and dephosphorylated by phosphatase PP1.

It localises to the cytoplasm. Its subcellular location is the perinuclear region. The protein localises to the golgi apparatus. The protein resides in the trans-Golgi network. It is found in the nucleus. It localises to the nucleolus. Its subcellular location is the nucleus matrix. The protein localises to the membrane. Its activity is regulated as follows. Inhibited by brefeldin A. In terms of biological role, promotes guanine-nucleotide exchange on ARF1 and ARF3. Promotes the activation of ARF1/ARF3 through replacement of GDP with GTP. Involved in vesicular trafficking. Required for the maintenance of Golgi structure; the function may be independent of its GEF activity. Required for the maturation of integrin beta-1 in the Golgi. Involved in the establishment and persistence of cell polarity during directed cell movement in wound healing. Proposed to act as A kinase-anchoring protein (AKAP) and may mediate crosstalk between Arf and PKA pathways. Inhibits GAP activity of MYO9B probably through competitive RhoA binding. The function in the nucleus remains to be determined. The chain is Brefeldin A-inhibited guanine nucleotide-exchange protein 1 (Arfgef1) from Mus musculus (Mouse).